The primary structure comprises 91 residues: Small ribosomal subunit protein uS19 (91 aa).

It belongs to the universal ribosomal protein uS19 family.

Functionally, protein S19 forms a complex with S13 that binds strongly to the 16S ribosomal RNA. The chain is Small ribosomal subunit protein uS19 from Bordetella pertussis (strain Tohama I / ATCC BAA-589 / NCTC 13251).